The primary structure comprises 172 residues: S-ribosylhomocysteine lyase (172 aa).

The Fe cation site is built by histidine 54, histidine 58, and cysteine 128.

It belongs to the LuxS family. Homodimer. It depends on Fe cation as a cofactor.

The enzyme catalyses S-(5-deoxy-D-ribos-5-yl)-L-homocysteine = (S)-4,5-dihydroxypentane-2,3-dione + L-homocysteine. Functionally, involved in the synthesis of autoinducer 2 (AI-2) which is secreted by bacteria and is used to communicate both the cell density and the metabolic potential of the environment. The regulation of gene expression in response to changes in cell density is called quorum sensing. Catalyzes the transformation of S-ribosylhomocysteine (RHC) to homocysteine (HC) and 4,5-dihydroxy-2,3-pentadione (DPD). In Aliivibrio fischeri (strain MJ11) (Vibrio fischeri), this protein is S-ribosylhomocysteine lyase.